A 210-amino-acid polypeptide reads, in one-letter code: Chaperone protein TorD (210 aa).

Belongs to the TorD/DmsD family. TorD subfamily.

Its subcellular location is the cytoplasm. In terms of biological role, involved in the biogenesis of TorA. Acts on TorA before the insertion of the molybdenum cofactor and, as a result, probably favors a conformation of the apoenzyme that is competent for acquiring the cofactor. This is Chaperone protein TorD from Salmonella agona (strain SL483).